Here is a 490-residue protein sequence, read N- to C-terminus: Betaine aldehyde dehydrogenase (490 aa).

Aspartate 93 provides a ligand contact to K(+). Residue 150 to 152 (GAW) participates in NAD(+) binding. Catalysis depends on lysine 162, which acts as the Charge relay system. NAD(+) is bound at residue 176 to 179 (KPSE). Residue valine 180 coordinates K(+). Residue 230-233 (GIAS) coordinates NAD(+). K(+) is bound at residue leucine 246. Residue glutamate 252 is the Proton acceptor of the active site. The NAD(+) site is built by glycine 254, cysteine 286, and glutamate 387. The active-site Nucleophile is the cysteine 286. Cysteine 286 bears the Cysteine sulfenic acid (-SOH) mark. K(+) is bound by residues lysine 457 and glycine 460. Residue glutamate 464 is the Charge relay system of the active site.

This sequence belongs to the aldehyde dehydrogenase family. As to quaternary structure, dimer of dimers. Requires K(+) as cofactor.

The enzyme catalyses betaine aldehyde + NAD(+) + H2O = glycine betaine + NADH + 2 H(+). It functions in the pathway amine and polyamine biosynthesis; betaine biosynthesis via choline pathway; betaine from betaine aldehyde: step 1/1. In terms of biological role, involved in the biosynthesis of the osmoprotectant glycine betaine. Catalyzes the irreversible oxidation of betaine aldehyde to the corresponding acid. The polypeptide is Betaine aldehyde dehydrogenase (Pectobacterium atrosepticum (strain SCRI 1043 / ATCC BAA-672) (Erwinia carotovora subsp. atroseptica)).